Consider the following 334-residue polypeptide: RNA ligase 2 (334 aa).

The interval 1–234 is adenylyltransferase; the sequence is MFKKYSSLEN…KCKNSKFSEK (234 aa). The AMP site is built by Glu-34, Lys-35, Ile-36, Asn-40, Arg-55, and Glu-99. Residue Lys-35 is the N6-AMP-lysine intermediate of the active site. Residues Ile-162, Leu-164, Asn-166, Glu-204, and Tyr-206 each contribute to the Mg(2+) site. AMP contacts are provided by Lys-225 and Lys-227.

Belongs to the RNA ligase 2 family. Mg(2+) serves as cofactor. The cofactor is Mn(2+).

The enzyme catalyses ATP + (ribonucleotide)n-3'-hydroxyl + 5'-phospho-(ribonucleotide)m = (ribonucleotide)n+m + AMP + diphosphate.. Its function is as follows. Repairs 3'-OH/5'-PO4 nicks in duplex RNA or RNA:DNA hybrid in which the broken 3'-OH strand is RNA. The nick ligation reaction entails three nucleotidyl transfer steps. In the first step, the RNA ligase reacts with ATP in the absence of nucleic acid to form a covalent ligase-AMP intermediate and release pyrophosphate. In step 2, the ligase-AMP binds to the nicked duplex nucleic acid and transfers the adenylate to the 5'-PO4 terminus to form an adenylylated nicked intermediate. In step 3, the RNA ligase directs the attack of the nick 3'-OH on the 5'-phosphoanhydride linkage, resulting in a repaired 3' - 5' phosphodiester and release of AMP. The sequence is that of RNA ligase 2 (Y10A) from Enterobacteria phage T4 (Bacteriophage T4).